The sequence spans 289 residues: Shikimate dehydrogenase (NADP(+)) (289 aa).

Shikimate-binding positions include 19 to 21 (SMS) and Thr66. Lys70 acts as the Proton acceptor in catalysis. 2 residues coordinate shikimate: Asn91 and Asp106. Residues 131–135 (GAGGA), 155–160 (NRTLKK), and Leu229 contribute to the NADP(+) site. Tyr231 serves as a coordination point for shikimate. Gly252 serves as a coordination point for NADP(+).

This sequence belongs to the shikimate dehydrogenase family. In terms of assembly, homodimer.

The enzyme catalyses shikimate + NADP(+) = 3-dehydroshikimate + NADPH + H(+). The protein operates within metabolic intermediate biosynthesis; chorismate biosynthesis; chorismate from D-erythrose 4-phosphate and phosphoenolpyruvate: step 4/7. In terms of biological role, involved in the biosynthesis of the chorismate, which leads to the biosynthesis of aromatic amino acids. Catalyzes the reversible NADPH linked reduction of 3-dehydroshikimate (DHSA) to yield shikimate (SA). The chain is Shikimate dehydrogenase (NADP(+)) from Halothermothrix orenii (strain H 168 / OCM 544 / DSM 9562).